We begin with the raw amino-acid sequence, 332 residues long: MSPTGSPATPALRHRTVLLDEAVEALVWRPDGVYVDGTFGRGGHSRAVLARLGPDGALVAFDKDPAAIAEAGTIQDARFSIEHESFAAMGERLAGRGHVAGVLLDLGISSPQIDEAARGFSFRFEGPLDMRMDTTRGITAAEWLAQAEEQDIARVIRDYGEERFAVQIAKAIVARRREPGDGGPLATTADLAALVAKAVKTREKGQDPATRTFQALRIHINQELEDLERGLKAAYDLLQVGGRLVVISFHSLEDRIVKRFMAAHARPQQDADPALRRAPLRAADLPQPTLRLLGRVKPGAQEVADNPRARSAVMRVAEKLAPAASGRGAAPA.

Residues 42-44 (GGH), aspartate 62, phenylalanine 86, aspartate 105, and glutamine 112 each bind S-adenosyl-L-methionine.

It belongs to the methyltransferase superfamily. RsmH family.

The protein resides in the cytoplasm. The enzyme catalyses cytidine(1402) in 16S rRNA + S-adenosyl-L-methionine = N(4)-methylcytidine(1402) in 16S rRNA + S-adenosyl-L-homocysteine + H(+). Its function is as follows. Specifically methylates the N4 position of cytidine in position 1402 (C1402) of 16S rRNA. The protein is Ribosomal RNA small subunit methyltransferase H of Cupriavidus pinatubonensis (strain JMP 134 / LMG 1197) (Cupriavidus necator (strain JMP 134)).